A 267-amino-acid chain; its full sequence is 3-isopropylmalate dehydratase large subunit (267 aa).

C146, C206, and C209 together coordinate [4Fe-4S] cluster.

The protein belongs to the aconitase/IPM isomerase family. LeuC type 1 subfamily. Heterodimer of LeuC and LeuD. Requires [4Fe-4S] cluster as cofactor.

The enzyme catalyses (2R,3S)-3-isopropylmalate = (2S)-2-isopropylmalate. Its pathway is amino-acid biosynthesis; L-leucine biosynthesis; L-leucine from 3-methyl-2-oxobutanoate: step 2/4. Functionally, catalyzes the isomerization between 2-isopropylmalate and 3-isopropylmalate, via the formation of 2-isopropylmaleate. This chain is 3-isopropylmalate dehydratase large subunit (leuC), found in Cupriavidus necator (Alcaligenes eutrophus).